The primary structure comprises 162 residues: Lymphocyte antigen 86 (162 aa).

The N-terminal stretch at M1–G20 is a signal peptide. Intrachain disulfides connect C33-C58, C45-C154, and C102-C112. N-linked (GlcNAc...) asparagine glycosylation occurs at N96. An N-linked (GlcNAc...) asparagine glycan is attached at N156.

M-shaped tetramer of two CD180-LY86 heterodimers. In terms of tissue distribution, highly expressed in B-cells, monocytes and tonsil.

Its subcellular location is the secreted. It localises to the extracellular space. May cooperate with CD180 and TLR4 to mediate the innate immune response to bacterial lipopolysaccharide (LPS) and cytokine production. Important for efficient CD180 cell surface expression. The protein is Lymphocyte antigen 86 (LY86) of Homo sapiens (Human).